The sequence spans 104 residues: Large ribosomal subunit protein bL21 (104 aa).

This sequence belongs to the bacterial ribosomal protein bL21 family. As to quaternary structure, part of the 50S ribosomal subunit. Contacts protein L20.

Functionally, this protein binds to 23S rRNA in the presence of protein L20. This chain is Large ribosomal subunit protein bL21, found in Pseudomonas entomophila (strain L48).